The sequence spans 374 residues: Putative 12-oxophytodienoate reductase 5 (374 aa).

Residues 30-32, A63, and Q105 each bind FMN; that span reads PMT. Residue 177–180 participates in substrate binding; that stretch reads HGAN. Catalysis depends on Y182, which acts as the Proton donor. Position 229 (R229) interacts with FMN. A substrate-binding site is contributed by R270. Residues G300 and 321 to 322 contribute to the FMN site; that span reads GR.

Belongs to the NADH:flavin oxidoreductase/NADH oxidase family. Requires FMN as cofactor.

Putative oxophytodienoate reductase that may be involved in the biosynthesis or metabolism of oxylipin signaling molecules. The polypeptide is Putative 12-oxophytodienoate reductase 5 (OPR5) (Oryza sativa subsp. japonica (Rice)).